The chain runs to 113 residues: uncharacterized protein (113 aa).

This is an uncharacterized protein from Mycoplasma pneumoniae (strain ATCC 29342 / M129 / Subtype 1) (Mycoplasmoides pneumoniae).